The chain runs to 223 residues: Lipoprotein-releasing system ATP-binding protein LolD (223 aa).

Residues 2–223 form the ABC transporter domain; it reads IQVRNLKKTF…LRDGEIVTCA (222 aa). Residue 38–45 participates in ATP binding; sequence GVSGAGKT.

Belongs to the ABC transporter superfamily. Lipoprotein translocase (TC 3.A.1.125) family. As to quaternary structure, the complex is composed of two ATP-binding proteins (LolD) and two transmembrane proteins (LolC and LolE).

The protein resides in the cell inner membrane. Part of the ABC transporter complex LolCDE involved in the translocation of mature outer membrane-directed lipoproteins, from the inner membrane to the periplasmic chaperone, LolA. Responsible for the formation of the LolA-lipoprotein complex in an ATP-dependent manner. This is Lipoprotein-releasing system ATP-binding protein LolD from Syntrophus aciditrophicus (strain SB).